A 544-amino-acid polypeptide reads, in one-letter code: U1 small nuclear ribonucleoprotein component PRP42 (544 aa).

HAT repeat units follow at residues 7 to 39, 51 to 83, 85 to 118, 121 to 156, and 163 to 195; these read LIHD…YIVK, QLLK…LEYK, GNVS…FCNN, SHQK…QISS, and KYWN…DIMD. Residues 230–235 carry the Nuclear localization signal motif; that stretch reads KKKLKK. 4 HAT repeats span residues 255-288, 290-322, 366-397, and 456-488; these read FESK…YTIT, QTDS…WLIN, NLLE…FKTF, and VEKN…LIYF.

As to quaternary structure, component of the 18S U1 snRNP particle, a subcomplex of the spliceosome.

Its subcellular location is the nucleus. Essential component of the U1 snRNP particle, which recognizes and binds the 5'-splice site of pre-mRNA. Together with other non-snRNP factors, U1 snRNP forms the spliceosomal commitment complex, that targets pre-mRNA to the splicing pathway. U1 snRNP is cotranscriptionally recruited to intron-containing genes. Required for U1 snRNP biogenesis. The chain is U1 small nuclear ribonucleoprotein component PRP42 (PRP42) from Saccharomyces cerevisiae (strain ATCC 204508 / S288c) (Baker's yeast).